Reading from the N-terminus, the 505-residue chain is Maturase K (505 aa).

The protein belongs to the intron maturase 2 family. MatK subfamily.

It is found in the plastid. Its subcellular location is the chloroplast. Usually encoded in the trnK tRNA gene intron. Probably assists in splicing its own and other chloroplast group II introns. This Portulacaria afra (Elephant's food) protein is Maturase K.